Consider the following 358-residue polypeptide: UDP-N-acetylglucosamine--N-acetylmuramyl-(pentapeptide) pyrophosphoryl-undecaprenol N-acetylglucosamine transferase (358 aa).

UDP-N-acetyl-alpha-D-glucosamine contacts are provided by residues 11 to 13, arginine 163, serine 191, isoleucine 245, and glutamine 290; that span reads TGG.

The protein belongs to the glycosyltransferase 28 family. MurG subfamily.

The protein resides in the cell inner membrane. It catalyses the reaction di-trans,octa-cis-undecaprenyl diphospho-N-acetyl-alpha-D-muramoyl-L-alanyl-D-glutamyl-meso-2,6-diaminopimeloyl-D-alanyl-D-alanine + UDP-N-acetyl-alpha-D-glucosamine = di-trans,octa-cis-undecaprenyl diphospho-[N-acetyl-alpha-D-glucosaminyl-(1-&gt;4)]-N-acetyl-alpha-D-muramoyl-L-alanyl-D-glutamyl-meso-2,6-diaminopimeloyl-D-alanyl-D-alanine + UDP + H(+). It participates in cell wall biogenesis; peptidoglycan biosynthesis. Its function is as follows. Cell wall formation. Catalyzes the transfer of a GlcNAc subunit on undecaprenyl-pyrophosphoryl-MurNAc-pentapeptide (lipid intermediate I) to form undecaprenyl-pyrophosphoryl-MurNAc-(pentapeptide)GlcNAc (lipid intermediate II). The sequence is that of UDP-N-acetylglucosamine--N-acetylmuramyl-(pentapeptide) pyrophosphoryl-undecaprenol N-acetylglucosamine transferase from Janthinobacterium sp. (strain Marseille) (Minibacterium massiliensis).